A 173-amino-acid polypeptide reads, in one-letter code: Cyclic pyranopterin monophosphate synthase (173 aa).

Residues 75 to 77 (MCH) and 117 to 118 (ME) contribute to the substrate site. Asp132 is a catalytic residue. The interval 152 to 173 (SGGKSGHYQRENSSVGGFANEQ) is disordered. The segment covering 162–173 (ENSSVGGFANEQ) has biased composition (polar residues).

This sequence belongs to the MoaC family. In terms of assembly, homohexamer; trimer of dimers.

The catalysed reaction is (8S)-3',8-cyclo-7,8-dihydroguanosine 5'-triphosphate = cyclic pyranopterin phosphate + diphosphate. It functions in the pathway cofactor biosynthesis; molybdopterin biosynthesis. Functionally, catalyzes the conversion of (8S)-3',8-cyclo-7,8-dihydroguanosine 5'-triphosphate to cyclic pyranopterin monophosphate (cPMP). This is Cyclic pyranopterin monophosphate synthase from Geobacillus sp. (strain WCH70).